A 242-amino-acid polypeptide reads, in one-letter code: Probable L-ribulose-5-phosphate 4-epimerase UlaF (242 aa).

Substrate is bound by residues 31 to 32, 48 to 49, and 78 to 79; these read GN, SG, and SS. Asp80, His99, and His101 together coordinate Zn(2+). Asp124 functions as the Proton donor/acceptor in the catalytic mechanism. His175 contributes to the Zn(2+) binding site. The Proton donor/acceptor role is filled by Tyr234.

The protein belongs to the aldolase class II family. AraD/FucA subfamily. The cofactor is Zn(2+).

The enzyme catalyses L-ribulose 5-phosphate = D-xylulose 5-phosphate. It participates in cofactor degradation; L-ascorbate degradation; D-xylulose 5-phosphate from L-ascorbate: step 4/4. Its function is as follows. Catalyzes the isomerization of L-ribulose 5-phosphate to D-xylulose 5-phosphate. Is involved in the anaerobic L-ascorbate utilization. The polypeptide is Probable L-ribulose-5-phosphate 4-epimerase UlaF (Mycoplasma pneumoniae (strain ATCC 29342 / M129 / Subtype 1) (Mycoplasmoides pneumoniae)).